We begin with the raw amino-acid sequence, 201 residues long: 3-isopropylmalate dehydratase small subunit (201 aa).

Belongs to the LeuD family. LeuD type 1 subfamily. Heterodimer of LeuC and LeuD.

The enzyme catalyses (2R,3S)-3-isopropylmalate = (2S)-2-isopropylmalate. It participates in amino-acid biosynthesis; L-leucine biosynthesis; L-leucine from 3-methyl-2-oxobutanoate: step 2/4. Catalyzes the isomerization between 2-isopropylmalate and 3-isopropylmalate, via the formation of 2-isopropylmaleate. In Methylorubrum extorquens (strain CM4 / NCIMB 13688) (Methylobacterium extorquens), this protein is 3-isopropylmalate dehydratase small subunit.